The sequence spans 259 residues: Ribosomal RNA small subunit methyltransferase A (259 aa).

S-adenosyl-L-methionine is bound by residues asparagine 13, leucine 15, glycine 40, glutamate 61, aspartate 85, and asparagine 103.

This sequence belongs to the class I-like SAM-binding methyltransferase superfamily. rRNA adenine N(6)-methyltransferase family. RsmA subfamily.

It localises to the cytoplasm. The enzyme catalyses adenosine(1518)/adenosine(1519) in 16S rRNA + 4 S-adenosyl-L-methionine = N(6)-dimethyladenosine(1518)/N(6)-dimethyladenosine(1519) in 16S rRNA + 4 S-adenosyl-L-homocysteine + 4 H(+). Its function is as follows. Specifically dimethylates two adjacent adenosines (A1518 and A1519) in the loop of a conserved hairpin near the 3'-end of 16S rRNA in the 30S particle. May play a critical role in biogenesis of 30S subunits. This is Ribosomal RNA small subunit methyltransferase A from Neisseria meningitidis serogroup A / serotype 4A (strain DSM 15465 / Z2491).